The sequence spans 206 residues: MPPTIRNNFPLFHDFVTASHFITQTILMRLSDAMYLEGSTRFENSHREDKPSTTTLVLLHYPKNFDNAHSGHNKHTDIGSLTLLFTPQWGLQLLSPIQKSKSWLWVQPRPGHAVINVGDSLRFLSGKRLKSCLHRVYPTGEVYQEEDRYSIAYFLRPESAANFEDVDGKVVSAKRWHDEKYVTYTEPHEKQDLSNILTGGMDQILA.

The 107-residue stretch at 51–157 (PSTTTLVLLH…RYSIAYFLRP (107 aa)) folds into the Fe2OG dioxygenase domain. H75, D77, and H134 together coordinate Fe cation. R148 lines the 2-oxoglutarate pocket.

Belongs to the iron/ascorbate-dependent oxidoreductase family. The cofactor is Fe(2+).

The enzyme catalyses L-glutamate + 2-oxoglutarate + O2 = (3R)-3-hydroxy-L-glutamate + succinate + CO2. It participates in secondary metabolite biosynthesis. Its function is as follows. 2-oxoglutarate-dependent dioxygenase; part of the gene cluster that mediates the biosynthesis of the psychoactive metabolites ibotenic acid and muscimol. The first committed step is glutamate hydroxylation by the 2-oxoglutarate-dependent dioxygenase iboH, and the last step is decarboxylation of ibotenic acid to muscimol by the decarboxylase iboD. The order of the intermediate reactions is somewhat ambiguous. IboA likely activates the carboxylic acid at position 5 to introduce an amide bond, and the flavin monooxygenase iboF generates the N-O bond. There are several options for the latter step. One option is that iboF directly hydroxylates the amide nitrogen formed by iboA to produce a hydroxamic acid species. Another option is that iboF hydroxylates an external N-containing compound, whose resulting N-O bond is subsequently introduced into the hydroxyglutamate scaffold. The paralogous PLP-dependent cystathionine gamma-synthase-like enzymes iboG1 and iboG2 are likely involved in substitution of the OH group at position 3 by the O-N moiety. The first cyclic intermediate is most probably tricholomic acid which is likely desaturated to ibotenic acid by the cytochrome P450 monooxygenase iboC. The sequence is that of 2-oxoglutarate-dependent dioxygenase iboH from Amanita muscaria (strain Koide BX008).